A 316-amino-acid polypeptide reads, in one-letter code: Methionyl-tRNA formyltransferase (316 aa).

112-115 is a (6S)-5,6,7,8-tetrahydrofolate binding site; that stretch reads SLLP.

It belongs to the Fmt family.

The catalysed reaction is L-methionyl-tRNA(fMet) + (6R)-10-formyltetrahydrofolate = N-formyl-L-methionyl-tRNA(fMet) + (6S)-5,6,7,8-tetrahydrofolate + H(+). Its function is as follows. Attaches a formyl group to the free amino group of methionyl-tRNA(fMet). The formyl group appears to play a dual role in the initiator identity of N-formylmethionyl-tRNA by promoting its recognition by IF2 and preventing the misappropriation of this tRNA by the elongation apparatus. The polypeptide is Methionyl-tRNA formyltransferase (Actinobacillus pleuropneumoniae serotype 5b (strain L20)).